The following is a 166-amino-acid chain: PTS system glucose-specific EIIA component (166 aa).

In terms of domain architecture, PTS EIIA type-1 spans 34-138; that stretch reads DPVFAQKMMG…SVISPIIITN (105 aa). Zn(2+) contacts are provided by histidine 71 and histidine 86. Histidine 86 functions as the Tele-phosphohistidine intermediate; for EIIA activity in the catalytic mechanism. Residue histidine 86 is modified to Phosphohistidine; by HPr.

In terms of assembly, heterodimer with glycerol kinase (glpk). Requires Zn(2+) as cofactor.

The protein localises to the cytoplasm. The phosphoenolpyruvate-dependent sugar phosphotransferase system (sugar PTS), a major carbohydrate active transport system, catalyzes the phosphorylation of incoming sugar substrates concomitantly with their translocation across the cell membrane. The enzyme II complex composed of PtsG and Crr is involved in glucose transport. This is PTS system glucose-specific EIIA component (crr) from Staphylococcus aureus (strain MRSA252).